We begin with the raw amino-acid sequence, 225 residues long: Membrane protein (225 aa).

At 1–20 (MSNETNCTLDFEQSVQLFKE) the chain is on the virion surface side. Asparagine 3 and asparagine 6 each carry an N-linked (GlcNAc...) asparagine; by host glycan. A helical transmembrane segment spans residues 21 to 41 (YNLFITAFLLFLTIILQYGYA). Over 42-51 (TRSKVIYTLK) the chain is Intravirion. Residues 52-72 (MIVLWCFWPLNIAVGVISCIY) traverse the membrane as a helical segment. At 73 to 77 (PPNTG) the chain is on the virion surface side. The helical transmembrane segment at 78–98 (GLVAAIILTVFACLSFVGYWI) threads the bilayer. The Intravirion segment spans residues 99–225 (QSIRLFKRCR…VATGGSSLYT (127 aa)).

The protein belongs to the gammacoronaviruses M protein family. In terms of assembly, homomultimer. Interacts with envelope E protein in the budding compartment of the host cell, which is located between endoplasmic reticulum and the Golgi complex. Forms a complex with HE and S proteins. Interacts with nucleocapsid N protein. This interaction probably participates in RNA packaging into the virus.

Its subcellular location is the virion membrane. The protein resides in the host Golgi apparatus membrane. Functionally, component of the viral envelope that plays a central role in virus morphogenesis and assembly via its interactions with other viral proteins. In Gallus gallus (Chicken), this protein is Membrane protein.